The primary structure comprises 247 residues: Cell division protein ZapD (247 aa).

This sequence belongs to the ZapD family. As to quaternary structure, interacts with FtsZ.

It localises to the cytoplasm. In terms of biological role, cell division factor that enhances FtsZ-ring assembly. Directly interacts with FtsZ and promotes bundling of FtsZ protofilaments, with a reduction in FtsZ GTPase activity. This chain is Cell division protein ZapD, found in Cronobacter sakazakii (strain ATCC BAA-894) (Enterobacter sakazakii).